We begin with the raw amino-acid sequence, 349 residues long: Isopentenyl-diphosphate delta-isomerase (349 aa).

5–6 (RK) is a binding site for substrate. Residues S61, 62 to 64 (SMT), S92, and N120 contribute to the FMN site. 92–94 (SMR) is a binding site for substrate. Q159 contributes to the substrate binding site. Residue E160 coordinates Mg(2+). FMN contacts are provided by residues K189, T219, 269-271 (GLR), and 290-291 (AR).

Belongs to the IPP isomerase type 2 family. In terms of assembly, homooctamer. Dimer of tetramers. Requires FMN as cofactor. NADPH serves as cofactor. It depends on Mg(2+) as a cofactor.

The protein localises to the cytoplasm. It carries out the reaction isopentenyl diphosphate = dimethylallyl diphosphate. In terms of biological role, involved in the biosynthesis of isoprenoids. Catalyzes the 1,3-allylic rearrangement of the homoallylic substrate isopentenyl (IPP) to its allylic isomer, dimethylallyl diphosphate (DMAPP). The polypeptide is Isopentenyl-diphosphate delta-isomerase (Picrophilus torridus (strain ATCC 700027 / DSM 9790 / JCM 10055 / NBRC 100828 / KAW 2/3)).